Reading from the N-terminus, the 119-residue chain is Putative nitrilase-like protein YIL165C (119 aa).

Residues 1 to 82 form the CN hydrolase domain; that stretch reads MKNIAYEGRL…EGLLTAEINT (82 aa). Catalysis depends on Asp-21, which acts as the Proton acceptor.

The protein belongs to the carbon-nitrogen hydrolase superfamily. Nitrilase family.

This is Putative nitrilase-like protein YIL165C from Saccharomyces cerevisiae (strain ATCC 204508 / S288c) (Baker's yeast).